Reading from the N-terminus, the 2009-residue chain is Sodium channel protein type 1 subunit alpha (2009 aa).

Residues 1-128 (MEQTVLVPPG…KIAIKILVHS (128 aa)) are Cytoplasmic-facing. A compositionally biased stretch (basic and acidic residues) spans 28–48 (RIAEEKAKNPKPDKKDDDENG). The segment at 28-60 (RIAEEKAKNPKPDKKDDDENGPKPNSDLEAGKN) is disordered. The I repeat unit spans residues 110–454 (ILTPFNPLRK…QQMIEQLKKQ (345 aa)). Residues 129–146 (LFSMLIMCTILTNCVFMT) traverse the membrane as a helical segment. Over 147-152 (MSNPPD) the chain is Extracellular. Residues 153–177 (WTKNVEYTFTGIYTFESLIKIIARG) traverse the membrane as a helical segment. Residues 178 to 188 (FCLEDFTFLRD) lie on the Cytoplasmic side of the membrane. The helical transmembrane segment at 189–205 (PWNWLDFTVITFAYVTE) threads the bilayer. The Extracellular segment spans residues 206 to 213 (FVDLGNVS). Asn211 carries N-linked (GlcNAc...) asparagine glycosylation. Residues 214–235 (ALRTFRVLRALKTISVIPGLKT) form a helical membrane-spanning segment. Residues 236 to 245 (IVGALIQSVK) lie on the Cytoplasmic side of the membrane. The chain crosses the membrane as a helical span at residues 246–269 (KLSDVMILTVFCLSVFALIGLQLF). Residues 270 to 369 (MGNLRNKCIQ…YGYTSFDTFS (100 aa)) lie on the Extracellular side of the membrane. Cystine bridges form between Cys277/Cys345 and Cys336/Cys351. 5 N-linked (GlcNAc...) asparagine glycosylation sites follow: Asn284, Asn295, Asn301, Asn306, and Asn338. An intramembrane region (pore-forming) is located at residues 370-384 (WAFLSLFRLMTQDFW). At 385–397 (ENLYQLTLRAAGK) the chain is on the extracellular side. The helical transmembrane segment at 398 to 423 (TYMIFFVLVIFLGSFYLINLILAVVA) threads the bilayer. At 424 to 768 (MAYEEQNQAT…HVVNLVVMDP (345 aa)) the chain is on the cytoplasmic side. The interval 455–529 (QEAAQQAATA…FQKSESEDSI (75 aa)) is disordered. The segment covering 456–466 (EAAQQAATATA) has biased composition (low complexity). The residue at position 470 (Ser470) is a Phosphoserine. Residues 479-492 (LSDSSSEASKLSSK) are compositionally biased toward low complexity. Basic residues predominate over residues 495-506 (KERRNRRKKRKQ). Basic and acidic residues predominate over residues 520 to 529 (FQKSESEDSI). 6 positions are modified to phosphoserine: Ser523, Ser525, Ser550, Ser551, Ser607, and Ser730. Positions 584–627 (VGSENDFADDEHSTFEDNESRRDSLFVPRRHGERRNSNLSQTSR) are disordered. Positions 593 to 607 (DEHSTFEDNESRRDS) are enriched in basic and acidic residues. Residues 750–1022 (CSPYWLKVKH…QIAVDRMHKG (273 aa)) form an II repeat. Residues 769–787 (FVDLAITICIVLNTLFMAM) traverse the membrane as a helical segment. Residues 788–797 (EHYPMTDHFN) are Extracellular-facing. Residues 798-820 (NVLTVGNLVFTGIFTAEMFLKII) traverse the membrane as a helical segment. At 821-830 (AMDPYYYFQE) the chain is on the cytoplasmic side. Residues 831–849 (GWNIFDGFIVTLSLVELGL) form a helical membrane-spanning segment. Residues 850 to 854 (ANVEG) are Extracellular-facing. Residues 855–874 (LSVLRSFRLLRVFKLAKSWP) form a helical membrane-spanning segment. The Cytoplasmic segment spans residues 875–891 (TLNMLIKIIGNSVGALG). A helical transmembrane segment spans residues 892–912 (NLTLVLAIIVFIFAVVGMQLF). The Extracellular portion of the chain corresponds to 913–938 (GKSYKDCVCKIASDCQLPRWHMNDFF). Cysteines 921 and 927 form a disulfide. Positions 939 to 952 (HSFLIVFRVLCGEW) form an intramembrane region, pore-forming. The Extracellular portion of the chain corresponds to 953 to 965 (IETMWDCMEVAGQ). Cys959 and Cys968 are oxidised to a cystine. Residues 966 to 992 (AMCLTVFMMVMVIGNLVVLNLFLALLL) form a helical membrane-spanning segment. The Cytoplasmic portion of the chain corresponds to 993-1218 (SSFSADNLAA…RTCFRIVEHN (226 aa)). Residues 1129–1163 (TEDFSSESDLEESKEKLNESSSSSEGSTVDIGAPV) form a disordered region. One copy of the III repeat lies at 1200–1514 (RGKQWWNLRR…KKYYNAMKKL (315 aa)). Residues 1219–1237 (WFETFIVFMILLSSGALAF) traverse the membrane as a helical segment. Over 1238 to 1250 (EDIYIDQRKTIKT) the chain is Extracellular. A helical transmembrane segment spans residues 1251-1276 (MLEYADKVFTYIFILEMLLKWVAYGY). The Cytoplasmic segment spans residues 1277–1278 (QT). A helical transmembrane segment spans residues 1279–1304 (YFTNAWCWLDFLIVDVSLVSLTANAL). At 1305–1313 (GYSELGAIK) the chain is on the extracellular side. The chain crosses the membrane as a helical span at residues 1314–1332 (SLRTLRALRPLRALSRFEG). Residues 1333-1345 (MRVVVNALLGAIP) lie on the Cytoplasmic side of the membrane. A helical membrane pass occupies residues 1346 to 1369 (SIMNVLLVCLIFWLIFSIMGVNLF). The Extracellular segment spans residues 1370–1415 (AGKFYHCINTTTGDRFDIEDVNNHTDCLKLIERNETARWKNVKVNF). Cys1376 and Cys1396 are joined by a disulfide. Residues Asn1378, Asn1392, and Asn1403 are each glycosylated (N-linked (GlcNAc...) asparagine). An intramembrane region (pore-forming) is located at residues 1416–1433 (DNVGFGYLSLLQVATFKG). The Extracellular segment spans residues 1434 to 1457 (WMDIMYAAVDSRNVELQPKYEESL). A helical membrane pass occupies residues 1458–1483 (YMYLYFVIFIIFGSFFTLNLFIGVII). The Cytoplasmic segment spans residues 1484-1541 (DNFNQQKKKFGGQDIFMTEEQKKYYNAMKKLGSKKPQKPIPRPGNKFQGMVFDFVTRQ). The residue at position 1516 (Ser1516) is a Phosphoserine; by PKC. The IV repeat unit spans residues 1523-1821 (IPRPGNKFQG…WEKFDPDATQ (299 aa)). Residues 1542-1560 (VFDISIMILICLNMVTMMV) form a helical membrane-spanning segment. Residues 1561-1571 (ETDDQSEYVTT) lie on the Extracellular side of the membrane. Positions 1561–1571 (ETDDQSEYVTT) are S1-S2 loop of repeat IV. Residues 1572–1593 (ILSRINLVFIVLFTGECVLKLI) traverse the membrane as a helical segment. Residues 1594–1601 (SLRHYYFT) are Cytoplasmic-facing. The chain crosses the membrane as a helical span at residues 1602-1623 (IGWNIFDFVVVILSIVGMFLAE). Residues 1619–1636 (MFLAELIEKYFVSPTLFR) are S3b-S4 loop of repeat IV. At 1624 to 1636 (LIEKYFVSPTLFR) the chain is on the extracellular side. A helical membrane pass occupies residues 1637 to 1655 (VIRLARIGRILRLIKGAKG). At 1656 to 1665 (IRTLLFALMM) the chain is on the cytoplasmic side. The chain crosses the membrane as a helical span at residues 1666–1688 (SLPALFNIGLLLFLVMFIYAIFG). The Extracellular portion of the chain corresponds to 1689–1711 (MSNFAYVKREVGIDDMFNFETFG). An intramembrane region (pore-forming) is located at residues 1712–1726 (NSMICLFQITTSAGW). Residues 1727-1759 (DGLLAPILNSKPPDCDPNKVNPGSSVKGDCGNP) are Extracellular-facing. The cysteines at positions 1741 and 1756 are disulfide-linked. A helical membrane pass occupies residues 1760 to 1788 (SVGIFFFVSYIIISFLVVVNMYIAVILEN). At 1789-2009 (FSVATEESAE…EGKDEKAKGK (221 aa)) the chain is on the cytoplasmic side. The IQ domain occupies 1915–1944 (EEVSAVIIQRAYRRHLLKRTVKQASFTYNK). A disordered region spans residues 1986–2009 (YDRVTKPIVEKHEQEGKDEKAKGK). Residues 1988–2009 (RVTKPIVEKHEQEGKDEKAKGK) show a composition bias toward basic and acidic residues.

It belongs to the sodium channel (TC 1.A.1.10) family. Nav1.1/SCN1A subfamily. As to quaternary structure, the Nav1.1 voltage-gated sodium channel consists of an ion-conducting alpha subunit SCN1A which is functional on its own regulated by one or more beta-1 (SCN1B), beta-2 (SCN2B), beta-3 (SCN3B) and beta-4 (SCN4B) subunits. SCN1B and SCN3B are non-covalently associated with SCN1A. SCN2B and SCN4B are disulfide-linked to SCN1A. SCN1B regulates both the expression at the plasma membrane and the voltage dependence of Nav1.1 inactivation. SCN3B and SCN4B reduce Nav1.1 conductance. Probably interacts with TMEM233; modulates the gating properties of NaV1.1. Interacts with FGF13; regulates the steady-state inactivation of Nav.1.1. In terms of processing, phosphorylation at Ser-1516 by PKC in a highly conserved cytoplasmic loop slows inactivation of the sodium channel and reduces peak sodium currents.

Its subcellular location is the cell membrane. The catalysed reaction is Na(+)(in) = Na(+)(out). Its activity is regulated as follows. Activated by the spider toxins Hm1a and Hm1b (H.maculata, AC P60992 and AC P0DOC5) eliciting acute pain and mechanical allodynia. Inhibited by the conotoxin GVIIJ. Inhibited by the spider beta/delta-theraphotoxin-Pre1a. Functionally, pore-forming subunit of Nav1.1, a voltage-gated sodium (Nav) channel that directly mediates the depolarizing phase of action potentials in excitable membranes. Navs, also called VGSCs (voltage-gated sodium channels) or VDSCs (voltage-dependent sodium channels), operate by switching between closed and open conformations depending on the voltage difference across the membrane. In the open conformation they allow Na(+) ions to selectively pass through the pore, along their electrochemical gradient. The influx of Na(+) ions provokes membrane depolarization, initiating the propagation of electrical signals throughout cells and tissues. By regulating the excitability of neurons, ensures that they respond appropriately to synaptic inputs, maintaining the balance between excitation and inhibition in brain neural circuits. Nav1.1 plays a role in controlling the excitability and action potential propagation from somatosensory neurons, thereby contributing to the sensory perception of mechanically-induced pain. The chain is Sodium channel protein type 1 subunit alpha from Homo sapiens (Human).